The sequence spans 249 residues: 3-deoxy-D-manno-octulosonic acid kinase (249 aa).

Residue aspartate 175 is part of the active site.

It belongs to the protein kinase superfamily. KdkA/RfaP family.

It localises to the cell inner membrane. The enzyme catalyses an alpha-Kdo-(2-&gt;6)-lipid IVA + ATP = a 4-O-phospho-alpha-Kdo-(2-&gt;6)-lipid IVA + ADP + H(+). It participates in bacterial outer membrane biogenesis; LPS core biosynthesis. In terms of biological role, catalyzes the ATP-dependent phosphorylation of the 3-deoxy-D-manno-octulosonic acid (Kdo) residue in Kdo-lipid IV(A) at the 4-OH position. In Xanthomonas euvesicatoria pv. vesicatoria (strain 85-10) (Xanthomonas campestris pv. vesicatoria), this protein is 3-deoxy-D-manno-octulosonic acid kinase.